Reading from the N-terminus, the 255-residue chain is F-box/SPRY domain-containing protein 1 (255 aa).

Residues aspartate 3–histidine 51 form the F-box domain. Positions leucine 61–methionine 253 constitute a B30.2/SPRY domain.

It belongs to the FBXO45/Fsn family. Component of an E3 ubiquitin ligase complex composed of hiw and Fsn.

It localises to the synapse. It functions in the pathway protein modification; protein ubiquitination. Functionally, required in the presynaptic motoneuron to down-regulate the levels of wnd and restrain synaptic terminal growth at the neuromuscular junction (NMJ). This chain is F-box/SPRY domain-containing protein 1, found in Drosophila ananassae (Fruit fly).